Consider the following 455-residue polypeptide: Bifunctional protein GlmU (455 aa).

The interval 1–226 (MSLEIVILAA…AMEVQGANDR (226 aa)) is pyrophosphorylase. UDP-N-acetyl-alpha-D-glucosamine is bound by residues 8–11 (LAAG), Lys-22, Gln-73, 78–79 (GT), 99–101 (YGD), Gly-136, Glu-151, Asn-166, and Asn-224. Asp-101 lines the Mg(2+) pocket. Asn-224 provides a ligand contact to Mg(2+). The interval 227–247 (KQLAELERHYQLRAGRRLMAQ) is linker. The interval 248 to 455 (GVTLRDPARF…WKRPEKIKKD (208 aa)) is N-acetyltransferase. The UDP-N-acetyl-alpha-D-glucosamine site is built by Arg-330 and Lys-348. The active-site Proton acceptor is His-360. UDP-N-acetyl-alpha-D-glucosamine is bound by residues Tyr-363 and Asn-374. Acetyl-CoA contacts are provided by residues Ala-377, 383-384 (NY), Ser-402, Ala-420, and Arg-437.

The protein in the N-terminal section; belongs to the N-acetylglucosamine-1-phosphate uridyltransferase family. It in the C-terminal section; belongs to the transferase hexapeptide repeat family. Homotrimer. It depends on Mg(2+) as a cofactor.

The protein resides in the cytoplasm. It carries out the reaction alpha-D-glucosamine 1-phosphate + acetyl-CoA = N-acetyl-alpha-D-glucosamine 1-phosphate + CoA + H(+). It catalyses the reaction N-acetyl-alpha-D-glucosamine 1-phosphate + UTP + H(+) = UDP-N-acetyl-alpha-D-glucosamine + diphosphate. Its pathway is nucleotide-sugar biosynthesis; UDP-N-acetyl-alpha-D-glucosamine biosynthesis; N-acetyl-alpha-D-glucosamine 1-phosphate from alpha-D-glucosamine 6-phosphate (route II): step 2/2. It participates in nucleotide-sugar biosynthesis; UDP-N-acetyl-alpha-D-glucosamine biosynthesis; UDP-N-acetyl-alpha-D-glucosamine from N-acetyl-alpha-D-glucosamine 1-phosphate: step 1/1. It functions in the pathway bacterial outer membrane biogenesis; LPS lipid A biosynthesis. In terms of biological role, catalyzes the last two sequential reactions in the de novo biosynthetic pathway for UDP-N-acetylglucosamine (UDP-GlcNAc). The C-terminal domain catalyzes the transfer of acetyl group from acetyl coenzyme A to glucosamine-1-phosphate (GlcN-1-P) to produce N-acetylglucosamine-1-phosphate (GlcNAc-1-P), which is converted into UDP-GlcNAc by the transfer of uridine 5-monophosphate (from uridine 5-triphosphate), a reaction catalyzed by the N-terminal domain. The chain is Bifunctional protein GlmU from Pseudomonas fluorescens (strain ATCC BAA-477 / NRRL B-23932 / Pf-5).